The sequence spans 205 residues: dTTP/UTP pyrophosphatase (205 aa).

D66 functions as the Proton acceptor in the catalytic mechanism.

The protein belongs to the Maf family. YhdE subfamily. The cofactor is a divalent metal cation.

The protein localises to the cytoplasm. It carries out the reaction dTTP + H2O = dTMP + diphosphate + H(+). The catalysed reaction is UTP + H2O = UMP + diphosphate + H(+). In terms of biological role, nucleoside triphosphate pyrophosphatase that hydrolyzes dTTP and UTP. May have a dual role in cell division arrest and in preventing the incorporation of modified nucleotides into cellular nucleic acids. The sequence is that of dTTP/UTP pyrophosphatase from Anaeromyxobacter sp. (strain Fw109-5).